The chain runs to 284 residues: 8-methylmenaquinol:fumarate reductase membrane anchor subunit (284 aa).

As to quaternary structure, the MFR complex is composed of three subunits: a flavoprotein (SdhA), an iron-sulfur protein (SdhB), and one hydrophobic anchor protein (SdhE).

It localises to the periplasm. The protein resides in the cell membrane. The catalysed reaction is 8-methylmenaquinone-6 + succinate = 8-methylmenaquinol-6 + fumarate. Its function is as follows. Membrane anchor subunit of 8-methylmenaquinol:fumarate reductase (MFR), that catalyzes the reduction of fumarate using 8-methylmenaquinol-6 as electron donor. The complex shows no succinate oxidation activity. Is involved in anaerobic metabolism. SdhE likely contains the quinol/quinone binding site. This chain is 8-methylmenaquinol:fumarate reductase membrane anchor subunit, found in Wolinella succinogenes (strain ATCC 29543 / DSM 1740 / CCUG 13145 / JCM 31913 / LMG 7466 / NCTC 11488 / FDC 602W) (Vibrio succinogenes).